A 127-amino-acid polypeptide reads, in one-letter code: Small ribosomal subunit protein uS11 (127 aa).

Belongs to the universal ribosomal protein uS11 family. As to quaternary structure, part of the 30S ribosomal subunit. Interacts with proteins S7 and S18. Binds to IF-3.

In terms of biological role, located on the platform of the 30S subunit, it bridges several disparate RNA helices of the 16S rRNA. Forms part of the Shine-Dalgarno cleft in the 70S ribosome. In Rickettsia canadensis (strain McKiel), this protein is Small ribosomal subunit protein uS11.